Consider the following 501-residue polypeptide: Pentatricopeptide repeat-containing protein At2g36730 (501 aa).

9 PPR repeats span residues 77–111, 112–146, 147–177, 178–212, 213–243, 246–276, 277–312, 313–343, and 349–379; these read TPSTWNMLSRGYSSSDSPVESIWVYSEMKRRGIKP, NKLTFPFLLKACASFLGLTAGRQIQVEVLKHGFDF, DVYVGNNLIHLYGTCKKTSDARKVFDEMTER, NVVSWNSIMTALVENGKLNLVFECFCEMIGKRFCP, DETTMVVLLSACGGNLSLGKLVHSQVMVREL, NCRLGTALVDMYAKSGGLEYARLVFERMVDK, NVWTWSAMIVGLAQYGFAEEALQLFSKMMKESSVRP, NYVTFLGVLCACSHTGLVDDGYKYFHEMEKI, and MMIHYGAMVDILGRAGRLNEAYDFIKKMPFE. Residues 384-462 form a type E motif region; sequence VWRTLLSACS…IAGESCLELG (79 aa). Residues 463–493 are type E(+) motif; the sequence is GSFHRFFSGYDPRSEYVSIYELLDLFKFQLT.

The protein belongs to the PPR family. PCMP-E subfamily.

This chain is Pentatricopeptide repeat-containing protein At2g36730 (PCMP-E44), found in Arabidopsis thaliana (Mouse-ear cress).